We begin with the raw amino-acid sequence, 1588 residues long: Centrosomal protein of 170 kDa (1588 aa).

The 51-residue stretch at 23–73 folds into the FHA domain; it reads IFVGRDDCELMLQSRSVDKQHAVINYDASMDEHLVKDLGSLNGTFVNDVRI. Disordered regions lie at residues 121-172, 299-323, 338-447, and 461-508; these read LSQK…MPRG, KFTSDQRHKSKKASPGTQDLPGIQT, QNNP…EEPS, and SGSL…NPNS. Serine 141 is subject to Phosphoserine. Over residues 155–164 the composition is skewed to basic and acidic residues; that stretch reads EALKSEEKPM. Positions 347 to 357 are enriched in basic and acidic residues; it reads ERTEEDSKSIK. 2 positions are modified to phosphoserine: serine 355 and serine 358. Tyrosine 363 carries the phosphotyrosine modification. Residues 407 to 418 show a composition bias toward basic and acidic residues; it reads KKKAQSTEKHQE. A phosphoserine mark is found at serine 443, serine 463, and serine 494. Threonine 498 is subject to Phosphothreonine. 4 positions are modified to phosphoserine: serine 568, serine 577, serine 628, and serine 631. The tract at residues 602 to 854 is disordered; the sequence is ELSATVENET…PHINKQNSSV (253 aa). Polar residues predominate over residues 620 to 631; that stretch reads LRSTSCTTSLAS. Residue threonine 639 is modified to Phosphothreonine. Residues 645-654 show a composition bias toward basic and acidic residues; it reads NEEKLLESSR. A Phosphoserine modification is found at serine 662. A compositionally biased stretch (basic and acidic residues) spans 663-691; sequence EIGEKQDTELQEKEAQVYQSEKHDADRGL. Serine 718 is subject to Phosphoserine. The span at 720 to 731 shows a compositional bias: basic and acidic residues; sequence SKEKSETEKETS. A Phosphothreonine modification is found at threonine 752. 2 stretches are compositionally biased toward basic and acidic residues: residues 764-774 and 789-821; these read HIDKCREESSK and SKGDRVIQNESKRRKAEEIPKCQASKGDKKESS. Positions 822–839 are enriched in polar residues; the sequence is KSLVRQGSFTIDKPSSNI. 3 positions are modified to phosphoserine: serine 829, serine 870, and serine 872. Positions 844–1588 are targeting to microtubules; it reads IPHINKQNSS…GEEEDVTVHE (745 aa). The segment covering 899–908 has biased composition (basic and acidic residues); it reads LREDNNKTDE. Disordered regions lie at residues 899 to 1222 and 1228 to 1247; these read LRED…RWRR and ASTSEDEFGSNRNSPKHTRL. Phosphothreonine occurs at positions 906 and 912. The span at 913 to 937 shows a compositional bias: polar residues; sequence PSYNRDNSISPESDVDTASTISLVT. Phosphoserine occurs at positions 922, 925, and 950. Residues 967 to 980 show a composition bias toward basic and acidic residues; sequence DVTKSGSREKIEKK. Phosphoserine is present on serine 1008. Phosphothreonine is present on threonine 1012. The segment covering 1028-1038 has biased composition (polar residues); the sequence is IMSSDQETYSC. Phosphothreonine is present on threonine 1047. Serine 1048 carries the post-translational modification Phosphoserine. Residues 1049–1062 show a composition bias toward basic and acidic residues; it reads ADEHNIHSKLEGGK. A compositionally biased stretch (low complexity) spans 1075–1093; it reads STSKSTTLPRPRPTRTSLL. Serine 1102, serine 1104, serine 1122, serine 1123, serine 1135, serine 1150, and serine 1155 each carry phosphoserine. A targeting to centrosomes region spans residues 1103-1588; that stretch reads DSELADADKA…GEEEDVTVHE (486 aa). Residues 1112-1128 are compositionally biased toward low complexity; it reads ASVASEVSTTSSTSKPP. Over residues 1158–1173 the composition is skewed to low complexity; the sequence is EATISRSSASARTAEA. Serine 1188, serine 1195, serine 1200, serine 1229, serine 1231, serine 1241, serine 1260, and serine 1270 each carry phosphoserine. The span at 1191 to 1218 shows a compositional bias: polar residues; the sequence is TRANSISRLSDSKVKSMSSTHGSPSVNS. The tract at residues 1315 to 1334 is disordered; the sequence is SVTSSGTAPSTTVSTAATTP. Residue serine 1362 is modified to Phosphoserine. Positions 1370-1398 are disordered; it reads PLVHSKTPEGNNGRSVDSRPQPAEHPDHL. Positions 1467–1495 form a coiled coil; sequence KTSSMEISSILQELKRVEKQLQVINAMID. Positions 1511–1540 are disordered; that stretch reads AILPSPPKQKSSPVNNHSSPSQTPALCPPE. Positions 1518–1534 are enriched in polar residues; it reads KQKSSPVNNHSSPSQTP. A phosphoserine mark is found at serine 1521 and serine 1522.

It belongs to the CEP170 family. In terms of assembly, interacts with CCDC68 and CCDC120; leading to recruitment to centrosomes. Interacts with PLK1. Interacts with NIN. Interacts with FHDC1. Interacts with CCDC61. Interacts with TBK1; efficient complex formation may be dependent on the presence of CCDC61. In terms of processing, phosphorylated; probably by PLK1.

Its subcellular location is the cytoplasm. The protein resides in the cytoskeleton. It localises to the microtubule organizing center. It is found in the centrosome. The protein localises to the centriole. Its subcellular location is the spindle. Plays a role in microtubule organization. Required for centriole subdistal appendage assembly. This Mus musculus (Mouse) protein is Centrosomal protein of 170 kDa (Cep170).